A 97-amino-acid polypeptide reads, in one-letter code: Small ribosomal subunit protein bS6 (97 aa).

This sequence belongs to the bacterial ribosomal protein bS6 family.

Its function is as follows. Binds together with bS18 to 16S ribosomal RNA. The polypeptide is Small ribosomal subunit protein bS6 (rpsF) (Lactococcus lactis subsp. lactis (strain IL1403) (Streptococcus lactis)).